The chain runs to 208 residues: Protein DEHYDRATION-INDUCED 19 homolog 6 (208 aa).

A disordered region spans residues 151 to 190; that stretch reads VDSPRRSEADAEGHGSSSSDDQKRREQGVMDDASKEELEE. 2 stretches are compositionally biased toward basic and acidic residues: residues 153–163 and 170–190; these read SPRRSEADAEG and DDQK…ELEE.

This sequence belongs to the Di19 family.

This chain is Protein DEHYDRATION-INDUCED 19 homolog 6 (DI19-6), found in Oryza sativa subsp. japonica (Rice).